Reading from the N-terminus, the 40-residue chain is Photosystem II reaction center protein J (40 aa).

The chain crosses the membrane as a helical span at residues 10–30 (LWLIGTVAGILVIGLVGIFFY).

Belongs to the PsbJ family. PSII is composed of 1 copy each of membrane proteins PsbA, PsbB, PsbC, PsbD, PsbE, PsbF, PsbH, PsbI, PsbJ, PsbK, PsbL, PsbM, PsbT, PsbX, PsbY, PsbZ, Psb30/Ycf12, at least 3 peripheral proteins of the oxygen-evolving complex and a large number of cofactors. It forms dimeric complexes.

The protein localises to the plastid. The protein resides in the chloroplast thylakoid membrane. In terms of biological role, one of the components of the core complex of photosystem II (PSII). PSII is a light-driven water:plastoquinone oxidoreductase that uses light energy to abstract electrons from H(2)O, generating O(2) and a proton gradient subsequently used for ATP formation. It consists of a core antenna complex that captures photons, and an electron transfer chain that converts photonic excitation into a charge separation. This Marchantia polymorpha (Common liverwort) protein is Photosystem II reaction center protein J.